The chain runs to 57 residues: Sec-independent protein translocase protein TatA (57 aa).

Residues 1-21 (MGISVWQLLIILLIVVMLFGT) traverse the membrane as a helical segment. The disordered stretch occupies residues 37–57 (GFRKSVSDGETTTQAEASSRS). A compositionally biased stretch (polar residues) spans 44-57 (DGETTTQAEASSRS).

The protein belongs to the TatA/E family. The Tat system comprises two distinct complexes: a TatABC complex, containing multiple copies of TatA, TatB and TatC subunits, and a separate TatA complex, containing only TatA subunits. Substrates initially bind to the TatABC complex, which probably triggers association of the separate TatA complex to form the active translocon.

It localises to the cell inner membrane. In terms of biological role, part of the twin-arginine translocation (Tat) system that transports large folded proteins containing a characteristic twin-arginine motif in their signal peptide across membranes. TatA could form the protein-conducting channel of the Tat system. The protein is Sec-independent protein translocase protein TatA of Stutzerimonas stutzeri (Pseudomonas stutzeri).